A 354-amino-acid chain; its full sequence is Protein-glutamate methylesterase/protein-glutamine glutaminase (354 aa).

A Response regulatory domain is found at 7–124; sequence KVLCVDDSAL…REGMLEYTEM (118 aa). D58 carries the 4-aspartylphosphate modification. The region spanning 156 to 348 is the CheB-type methylesterase domain; that stretch reads LLSSEKVIII…AALMKRAEAS (193 aa). Catalysis depends on residues S168, H194, and D290.

Belongs to the CheB family. Phosphorylated by CheA. Phosphorylation of the N-terminal regulatory domain activates the methylesterase activity.

Its subcellular location is the cytoplasm. It carries out the reaction [protein]-L-glutamate 5-O-methyl ester + H2O = L-glutamyl-[protein] + methanol + H(+). It catalyses the reaction L-glutaminyl-[protein] + H2O = L-glutamyl-[protein] + NH4(+). Functionally, involved in chemotaxis. Part of a chemotaxis signal transduction system that modulates chemotaxis in response to various stimuli. Catalyzes the demethylation of specific methylglutamate residues introduced into the chemoreceptors (methyl-accepting chemotaxis proteins or MCP) by CheR. Also mediates the irreversible deamidation of specific glutamine residues to glutamic acid. This chain is Protein-glutamate methylesterase/protein-glutamine glutaminase, found in Chromohalobacter salexigens (strain ATCC BAA-138 / DSM 3043 / CIP 106854 / NCIMB 13768 / 1H11).